The sequence spans 317 residues: Aspartate carbamoyltransferase catalytic subunit (317 aa).

Carbamoyl phosphate-binding residues include arginine 66 and threonine 67. Position 94 (lysine 94) interacts with L-aspartate. Carbamoyl phosphate is bound by residues arginine 116, histidine 144, and glutamine 147. Arginine 177 and arginine 231 together coordinate L-aspartate. Carbamoyl phosphate is bound by residues glycine 272 and proline 273.

The protein belongs to the aspartate/ornithine carbamoyltransferase superfamily. ATCase family. In terms of assembly, heterododecamer (2C3:3R2) of six catalytic PyrB chains organized as two trimers (C3), and six regulatory PyrI chains organized as three dimers (R2).

The catalysed reaction is carbamoyl phosphate + L-aspartate = N-carbamoyl-L-aspartate + phosphate + H(+). It functions in the pathway pyrimidine metabolism; UMP biosynthesis via de novo pathway; (S)-dihydroorotate from bicarbonate: step 2/3. Functionally, catalyzes the condensation of carbamoyl phosphate and aspartate to form carbamoyl aspartate and inorganic phosphate, the committed step in the de novo pyrimidine nucleotide biosynthesis pathway. In Rhodopseudomonas palustris (strain BisB5), this protein is Aspartate carbamoyltransferase catalytic subunit.